Consider the following 350-residue polypeptide: MLSLACFFSFLLMVKSSPLTFQERMLLKALGLNTRPNPIAPGPVPKSLRDIFEKGINKDNPCMMEGFGVPGNIVRSYRDQGPVAAMEEPQESLCLKKFLFFDLSAVENKEQLTLGQLEIKFKHNSYYGQQFHLRLYRTLQLSLKGMRESKMNRKLLVSQSFRLLHKSLYFNLTKVAKDWKTPEKNMGLLLEIYASSKLAGDNRSFAVCEPIQSFIYTSLLTVSLDPSSCKTPRAKRSTHSSPPTPSNICKKRRLYIDFKDVGWQNWVIAPRGYMANYCYGECPYPLTEMLRGTNHAVLQTLVHSVEPESTPLPCCAPTKLSPISMLYYDNNDNVVLRHYEDMVVDECGCK.

An N-terminal signal peptide occupies residues 1–16; it reads MLSLACFFSFLLMVKS. A propeptide spanning residues 17–236 is cleaved from the precursor; sequence SPLTFQERML…SSCKTPRAKR (220 aa). N-linked (GlcNAc...) asparagine glycosylation is found at Asn171 and Asn202. 3 disulfide bridges follow: Cys249-Cys315, Cys278-Cys347, and Cys282-Cys349.

It belongs to the TGF-beta family. In terms of assembly, homodimer; disulfide-linked. Also forms heterodimers with other TGF-beta family members including nodal2/nr-2 and bmp4.

It is found in the secreted. Required for posterior mesoderm formation during embryogenesis. Acts indirectly to suppress head formation by altering mesodermal patterning. Also involved in the establishment of left-right axis asymmetry, acting upstream of nodal/nr-1. Can exert long-range effects in the embryo. The chain is Derriere protein from Xenopus tropicalis (Western clawed frog).